Reading from the N-terminus, the 493-residue chain is CBL-interacting protein kinase 26 (493 aa).

Residues 12-266 (YEIGRQLGQG…IPKIKRSAWY (255 aa)) enclose the Protein kinase domain. Residues 18–26 (LGQGNFAKV) and K41 contribute to the ATP site. D134 acts as the Proton acceptor in catalysis. Positions 152–181 (DFGLSALSESKRHDGLLHTTCGTPAYVAPE) are activation loop. A disordered region spans residues 311–332 (KVYTNGEATTSDSPECSNSDGK). A compositionally biased stretch (polar residues) spans 316 to 332 (GEATTSDSPECSNSDGK). An NAF domain is found at 320-360 (TSDSPECSNSDGKQASLSLPNLNAFDIISLSTGFDLSNLFE). Residues 365 to 394 (RREERFTTRQPAAAIFAKLNELARRFKLKI) form a PPI region. The tract at residues 465 to 493 (GQHQQPEQSMQGMQGEQQPSRLPSQQPQG) is disordered.

The protein belongs to the protein kinase superfamily. CAMK Ser/Thr protein kinase family. SNF1 subfamily. It depends on Mn(2+) as a cofactor.

It catalyses the reaction L-seryl-[protein] + ATP = O-phospho-L-seryl-[protein] + ADP + H(+). The enzyme catalyses L-threonyl-[protein] + ATP = O-phospho-L-threonyl-[protein] + ADP + H(+). Functionally, CIPK serine-threonine protein kinases interact with CBL proteins. Binding of a CBL protein to the regulatory NAF domain of CIPK protein lead to the activation of the kinase in a calcium-dependent manner. The sequence is that of CBL-interacting protein kinase 26 (CIPK26) from Oryza sativa subsp. japonica (Rice).